A 47-amino-acid polypeptide reads, in one-letter code: Delta-stichotoxin-Hcr3a (47 aa).

Proline 3 carries the post-translational modification Hydroxyproline. 3 disulfide bridges follow: cysteine 4-cysteine 44, cysteine 6-cysteine 34, and cysteine 27-cysteine 45.

This sequence belongs to the sea anemone sodium channel inhibitory toxin family. Type I subfamily.

Its subcellular location is the secreted. The protein localises to the nematocyst. In terms of biological role, inhibits voltage-gated sodium channels (Nav). The chain is Delta-stichotoxin-Hcr3a from Radianthus crispa (Leathery sea anemone).